The primary structure comprises 649 residues: Threonine--tRNA ligase (649 aa).

One can recognise a TGS domain in the interval methionine 1–threonine 60. The tract at residues aspartate 248–proline 544 is catalytic. Residues cysteine 341, histidine 392, and histidine 521 each contribute to the Zn(2+) site.

It belongs to the class-II aminoacyl-tRNA synthetase family. Homodimer. It depends on Zn(2+) as a cofactor.

The protein resides in the cytoplasm. It carries out the reaction tRNA(Thr) + L-threonine + ATP = L-threonyl-tRNA(Thr) + AMP + diphosphate + H(+). Catalyzes the attachment of threonine to tRNA(Thr) in a two-step reaction: L-threonine is first activated by ATP to form Thr-AMP and then transferred to the acceptor end of tRNA(Thr). Also edits incorrectly charged L-seryl-tRNA(Thr). In Deinococcus deserti (strain DSM 17065 / CIP 109153 / LMG 22923 / VCD115), this protein is Threonine--tRNA ligase.